A 157-amino-acid polypeptide reads, in one-letter code: MGVIEFLFALAQDMILAAIPAVGFAMVFNVPVRALRWCALLGAIGHGSRMILMTSGLNIEWSTFMASMLVGTIGIQWSRWYLAHPKVFTVAAVIPMFPGISAYTAMISAVKISQLGYSEPLMITLLTNFLTASSIVGALSIGLSIPGLWLYRKRPRV.

Transmembrane regions (helical) follow at residues 8–28, 50–70, 87–107, and 129–149; these read FALA…AMVF, MILM…SMLV, VFTV…TAMI, and FLTA…PGLW.

The protein belongs to the ThrE exporter (TC 2.A.79) family. The transporter is composed of YjjB and YjjP.

Its subcellular location is the cell inner membrane. Involved in succinate export with YjjP. Both proteins are required for export. The sequence is that of Probable succinate transporter subunit YjjB from Escherichia coli (strain ATCC 8739 / DSM 1576 / NBRC 3972 / NCIMB 8545 / WDCM 00012 / Crooks).